A 347-amino-acid chain; its full sequence is Lipoyl synthase (347 aa).

Residues Cys77, Cys82, Cys88, Cys103, Cys107, Cys110, and Ser317 each coordinate [4Fe-4S] cluster. In terms of domain architecture, Radical SAM core spans 89 to 306; that stretch reads FADGTATFMI…MDYGKKIGFF (218 aa).

This sequence belongs to the radical SAM superfamily. Lipoyl synthase family. The cofactor is [4Fe-4S] cluster.

The protein resides in the cytoplasm. It carries out the reaction [[Fe-S] cluster scaffold protein carrying a second [4Fe-4S](2+) cluster] + N(6)-octanoyl-L-lysyl-[protein] + 2 oxidized [2Fe-2S]-[ferredoxin] + 2 S-adenosyl-L-methionine + 4 H(+) = [[Fe-S] cluster scaffold protein] + N(6)-[(R)-dihydrolipoyl]-L-lysyl-[protein] + 4 Fe(3+) + 2 hydrogen sulfide + 2 5'-deoxyadenosine + 2 L-methionine + 2 reduced [2Fe-2S]-[ferredoxin]. It functions in the pathway protein modification; protein lipoylation via endogenous pathway; protein N(6)-(lipoyl)lysine from octanoyl-[acyl-carrier-protein]: step 2/2. Catalyzes the radical-mediated insertion of two sulfur atoms into the C-6 and C-8 positions of the octanoyl moiety bound to the lipoyl domains of lipoate-dependent enzymes, thereby converting the octanoylated domains into lipoylated derivatives. The chain is Lipoyl synthase from Psychrobacter arcticus (strain DSM 17307 / VKM B-2377 / 273-4).